The following is a 616-amino-acid chain: Chaperone protein HscA (616 aa).

It belongs to the heat shock protein 70 family.

Chaperone involved in the maturation of iron-sulfur cluster-containing proteins. Has a low intrinsic ATPase activity which is markedly stimulated by HscB. Involved in the maturation of IscU. The protein is Chaperone protein HscA of Escherichia coli O17:K52:H18 (strain UMN026 / ExPEC).